The following is a 358-amino-acid chain: MPPPPRCAATTAHHSLLGSPTCLARPRRRCCPVRAAVAVQAEAQAKVSLIRIGTRGSPLALAQAHETRDKLKAAHSELAEEGAVEIVIIKTTGDMILDKPLADIGGKGLFTKEIDDALLQGRIDIAVHSMKDVPTYLPEGTILPCNLPREDVRDAFICLTASSLAELPAGSVVGSASLRRQSQILYKYPSLKVVNFRGNVQTRLRKLKEGDVHATLLALAGLKRLNMAETATSVLSVDEMLPAVAQGAIGIACRSSDDTMMNYLSSLNHEDTRLAVACEREFLSVLDGNCRTPIAAYASRDKDGNCSFRGLLASPDGSTVYETSRTGPYDFDIMVEMGKDAGHELKAKAGPGFFDSLQ.

An N-terminal signal peptide occupies residues 1–24; the sequence is MPPPPRCAATTAHHSLLGSPTCLA. Cys290 is subject to S-(dipyrrolylmethanemethyl)cysteine.

The protein belongs to the HMBS family. It depends on dipyrromethane as a cofactor.

It is found in the plastid. It localises to the chloroplast. It carries out the reaction 4 porphobilinogen + H2O = hydroxymethylbilane + 4 NH4(+). Its pathway is porphyrin-containing compound metabolism; protoporphyrin-IX biosynthesis; coproporphyrinogen-III from 5-aminolevulinate: step 2/4. It functions in the pathway porphyrin-containing compound metabolism; chlorophyll biosynthesis. Its function is as follows. Tetrapolymerization of the monopyrrole PBG into the hydroxymethylbilane pre-uroporphyrinogen in several discrete steps. In Oryza sativa subsp. japonica (Rice), this protein is Porphobilinogen deaminase, chloroplastic (HEMC).